The chain runs to 449 residues: 3-phosphoshikimate 1-carboxyvinyltransferase (449 aa).

The tract at residues 1–26 (MNHHLPSRPARSRQSQGLKGNLRVPG) is disordered. Residues K28, S29, and R33 each contribute to the 3-phosphoshikimate site. K28 provides a ligand contact to phosphoenolpyruvate. The phosphoenolpyruvate site is built by G100 and R128. 4 residues coordinate 3-phosphoshikimate: S174, Q176, D327, and K354. Q176 contributes to the phosphoenolpyruvate binding site. The active-site Proton acceptor is the D327. Phosphoenolpyruvate contacts are provided by R358 and R403.

The protein belongs to the EPSP synthase family. In terms of assembly, monomer.

It localises to the cytoplasm. It carries out the reaction 3-phosphoshikimate + phosphoenolpyruvate = 5-O-(1-carboxyvinyl)-3-phosphoshikimate + phosphate. It participates in metabolic intermediate biosynthesis; chorismate biosynthesis; chorismate from D-erythrose 4-phosphate and phosphoenolpyruvate: step 6/7. In terms of biological role, catalyzes the transfer of the enolpyruvyl moiety of phosphoenolpyruvate (PEP) to the 5-hydroxyl of shikimate-3-phosphate (S3P) to produce enolpyruvyl shikimate-3-phosphate and inorganic phosphate. This is 3-phosphoshikimate 1-carboxyvinyltransferase from Chelativorans sp. (strain BNC1).